The sequence spans 395 residues: S-adenosylmethionine synthase (395 aa).

ATP is bound at residue histidine 16. Aspartate 18 lines the Mg(2+) pocket. Glutamate 44 provides a ligand contact to K(+). The L-methionine site is built by glutamate 57 and glutamine 100. Residues 100–110 form a flexible loop region; the sequence is QSPDIAQGVDR. ATP-binding positions include 167–169, 233–234, aspartate 242, 248–249, alanine 265, and lysine 269; these read DAK, RF, and RK. Aspartate 242 contacts L-methionine. Lysine 273 serves as a coordination point for L-methionine.

Belongs to the AdoMet synthase family. Homotetramer; dimer of dimers. Requires Mg(2+) as cofactor. It depends on K(+) as a cofactor.

The protein resides in the cytoplasm. It carries out the reaction L-methionine + ATP + H2O = S-adenosyl-L-methionine + phosphate + diphosphate. Its pathway is amino-acid biosynthesis; S-adenosyl-L-methionine biosynthesis; S-adenosyl-L-methionine from L-methionine: step 1/1. In terms of biological role, catalyzes the formation of S-adenosylmethionine (AdoMet) from methionine and ATP. The overall synthetic reaction is composed of two sequential steps, AdoMet formation and the subsequent tripolyphosphate hydrolysis which occurs prior to release of AdoMet from the enzyme. In Burkholderia lata (strain ATCC 17760 / DSM 23089 / LMG 22485 / NCIMB 9086 / R18194 / 383), this protein is S-adenosylmethionine synthase.